A 154-amino-acid chain; its full sequence is Myoglobin (154 aa).

The Globin domain maps to 2–148 (GLSDQEWQHV…FRNDMASKYK (147 aa)). A nitrite-binding site is contributed by His-65. His-65 lines the O2 pocket. Heme b is bound at residue His-94.

It belongs to the globin family. As to quaternary structure, monomeric.

It localises to the cytoplasm. The protein localises to the sarcoplasm. It carries out the reaction Fe(III)-heme b-[protein] + nitric oxide + H2O = Fe(II)-heme b-[protein] + nitrite + 2 H(+). The catalysed reaction is H2O2 + AH2 = A + 2 H2O. Monomeric heme protein which primary function is to store oxygen and facilitate its diffusion within muscle tissues. Reversibly binds oxygen through a pentacoordinated heme iron and enables its timely and efficient release as needed during periods of heightened demand. Depending on the oxidative conditions of tissues and cells, and in addition to its ability to bind oxygen, it also has a nitrite reductase activity whereby it regulates the production of bioactive nitric oxide. Under stress conditions, like hypoxia and anoxia, it also protects cells against reactive oxygen species thanks to its pseudoperoxidase activity. The protein is Myoglobin (MB) of Uria lomvia (Thick-billed murre).